Here is a 122-residue protein sequence, read N- to C-terminus: Large ribosomal subunit protein uL14 (122 aa).

It belongs to the universal ribosomal protein uL14 family. In terms of assembly, part of the 50S ribosomal subunit. Forms a cluster with proteins L3 and L19. In the 70S ribosome, L14 and L19 interact and together make contacts with the 16S rRNA in bridges B5 and B8.

In terms of biological role, binds to 23S rRNA. Forms part of two intersubunit bridges in the 70S ribosome. This chain is Large ribosomal subunit protein uL14, found in Orientia tsutsugamushi (strain Boryong) (Rickettsia tsutsugamushi).